The following is a 608-amino-acid chain: Isocitrate dehydrogenase kinase/phosphatase (608 aa).

ATP is bound by residues 327-333 (APGIKGL) and K348. D383 is an active-site residue. Residues 589–608 (FDSTPDAGDGDSAGDAQRAA) form a disordered region.

It belongs to the AceK family.

Its subcellular location is the cytoplasm. It carries out the reaction L-seryl-[isocitrate dehydrogenase] + ATP = O-phospho-L-seryl-[isocitrate dehydrogenase] + ADP + H(+). In terms of biological role, bifunctional enzyme which can phosphorylate or dephosphorylate isocitrate dehydrogenase (IDH) on a specific serine residue. This is a regulatory mechanism which enables bacteria to bypass the Krebs cycle via the glyoxylate shunt in response to the source of carbon. When bacteria are grown on glucose, IDH is fully active and unphosphorylated, but when grown on acetate or ethanol, the activity of IDH declines drastically concomitant with its phosphorylation. The polypeptide is Isocitrate dehydrogenase kinase/phosphatase (Burkholderia ambifaria (strain MC40-6)).